We begin with the raw amino-acid sequence, 85 residues long: Coiled-coil-helix-coiled-coil-helix domain-containing protein 7 (85 aa).

The CHCH domain maps to 13–55 (SNPCLEETDASTKCMDDNRYEKDLCTPYFVKYKNCRKFWNGIM). Short sequence motifs (cx9C motif) lie at residues 16–26 (CLEETDASTKC) and 37–47 (CTPYFVKYKNC). 2 cysteine pairs are disulfide-bonded: Cys16–Cys47 and Cys26–Cys37.

This sequence belongs to the CHCHD7 family.

It is found in the mitochondrion intermembrane space. This Xenopus tropicalis (Western clawed frog) protein is Coiled-coil-helix-coiled-coil-helix domain-containing protein 7 (chchd7).